A 371-amino-acid chain; its full sequence is Diguanylate cyclase A (371 aa).

One can recognise a GGDEF domain in the interval 233 to 366; sequence ETLSILMIDI…GRNRVTLSKN (134 aa). Mg(2+)-binding residues include D241, I242, and E284. E284 acts as the Proton acceptor in catalysis.

Exists as a homodimer and as larger aggregates. Both dimers and aggregates possess DGC activity. It depends on Mg(2+) as a cofactor. Mn(2+) is required as a cofactor.

It localises to the cytoplasm. The catalysed reaction is 2 GTP = 3',3'-c-di-GMP + 2 diphosphate. Allosterically regulated by a feedback inhibition loop. Its function is as follows. Catalyzes the conversion of GTP to cyclic-di-GMP (c-di-GMP). Shows activity under aerobic and anaerobic reaction conditions. The chain is Diguanylate cyclase A from Treponema denticola (strain ATCC 35405 / DSM 14222 / CIP 103919 / JCM 8153 / KCTC 15104).